Reading from the N-terminus, the 445-residue chain is Phosphoglucosamine mutase (445 aa).

The active-site Phosphoserine intermediate is S102. Mg(2+)-binding residues include S102, D241, D243, and D245. Residue S102 is modified to Phosphoserine.

Belongs to the phosphohexose mutase family. The cofactor is Mg(2+). Activated by phosphorylation.

It catalyses the reaction alpha-D-glucosamine 1-phosphate = D-glucosamine 6-phosphate. Functionally, catalyzes the conversion of glucosamine-6-phosphate to glucosamine-1-phosphate. The polypeptide is Phosphoglucosamine mutase (Rhodococcus erythropolis (strain PR4 / NBRC 100887)).